A 356-amino-acid polypeptide reads, in one-letter code: Xylose/arabinose import permease protein XylH (356 aa).

10 helical membrane passes run 14-34 (LFLV…AYFS), 41-61 (IFQY…LMLC), 70-90 (ALAN…YQAI), 96-116 (IVVS…MNGL), 126-146 (LITT…YSGG), 161-181 (VSIL…LILL), 211-231 (VKII…IIQG), 242-262 (FTAD…TSLV), 266-286 (GSLV…NGFN), and 287-307 (ILGI…VVVM).

This sequence belongs to the binding-protein-dependent transport system permease family. As to quaternary structure, the complex is composed of two ATP-binding proteins (XylG), two transmembrane proteins (XylH) and a solute-binding protein (XylF).

It is found in the cell membrane. Part of the ABC transporter complex XylFGH involved in the uptake of xylose and arabinose. Responsible for the translocation of the substrate across the membrane. This is Xylose/arabinose import permease protein XylH from Sulfolobus acidocaldarius (strain ATCC 33909 / DSM 639 / JCM 8929 / NBRC 15157 / NCIMB 11770).